The following is a 496-amino-acid chain: Glycerol kinase (496 aa).

An ADP-binding site is contributed by T12. Positions 12, 13, and 14 each coordinate ATP. A sn-glycerol 3-phosphate-binding site is contributed by T12. Residue R16 participates in ADP binding. Sn-glycerol 3-phosphate contacts are provided by R82, E83, and Y134. Residues R82, E83, and Y134 each contribute to the glycerol site. H230 carries the post-translational modification Phosphohistidine; by HPr. Sn-glycerol 3-phosphate is bound at residue D244. D244 and Q245 together coordinate glycerol. 2 residues coordinate ADP: T266 and G309. Residues T266, G309, Q313, and G410 each coordinate ATP. ADP is bound by residues G410 and N414.

This sequence belongs to the FGGY kinase family. Homotetramer and homodimer (in equilibrium). The phosphoenolpyruvate-dependent sugar phosphotransferase system (PTS), including enzyme I, and histidine-containing protein (HPr) are required for the phosphorylation, which leads to the activation of the enzyme.

It carries out the reaction glycerol + ATP = sn-glycerol 3-phosphate + ADP + H(+). It participates in polyol metabolism; glycerol degradation via glycerol kinase pathway; sn-glycerol 3-phosphate from glycerol: step 1/1. Its activity is regulated as follows. Activated by phosphorylation and inhibited by fructose 1,6-bisphosphate (FBP). Its function is as follows. Key enzyme in the regulation of glycerol uptake and metabolism. Catalyzes the phosphorylation of glycerol to yield sn-glycerol 3-phosphate. This chain is Glycerol kinase, found in Bacillus cereus (strain Q1).